A 927-amino-acid chain; its full sequence is Small conductance calcium-activated potassium channel protein (927 aa).

Over residues 1 to 31 (MSIQKLNDTTNSGYVSSEETDSLLVSSSNPS) the composition is skewed to polar residues. Disordered regions lie at residues 1-131 (MSIQ…EDVE), 181-251 (LSLK…VKSA), and 296-336 (HLHQ…SSST). The segment covering 45–62 (SNSTNGPTTGASTSSSGS) has biased composition (low complexity). Over residues 63-77 (VSGGGGGSGSGGGSA) the composition is skewed to gly residues. Composition is skewed to polar residues over residues 95-107 (TSTY…QSQH) and 200-214 (NLGT…SSIP). 2 stretches are compositionally biased toward low complexity: residues 219-232 (SRCR…RRAS) and 296-308 (HLHQ…SQQQ). A compositionally biased stretch (polar residues) spans 314–336 (ITSSPTNGSRIIRQSSQPESSST). The chain crosses the membrane as a helical span at residues 489-509 (ALVMGMFGIIVMVIENELSSA). Residues 530 to 550 (TVILLGLIVAYHALEVQLFMI) traverse the membrane as a helical segment. The helical transmembrane segment at 569 to 589 (IGLELFICAIHPIPGEYYFQW) threads the bilayer. The helical transmembrane segment at 609–629 (VALSLPMFLRLYLICRVMLLH) threads the bilayer. Residues 658–678 (LMTICPGTVLLVFMVSLWIIA) form a helical membrane-spanning segment. An intramembrane region (pore-forming) is located at residues 696–716 (LLNSMWLTAITFLCVGYGDIV). The helical transmembrane segment at 724–744 (GITLTCGMVGAGCTALLVAVV) threads the bilayer. The segment at 763–839 (DTQLTKRLKN…ITDMAKTQNT (77 aa)) is calmodulin-binding.

The protein belongs to the potassium channel KCNN family. SK subfamily. Heterooligomer. The complex is composed of 4 channel subunits each of which binds to a calmodulin subunit which regulates the channel activity through calcium-binding.

The protein resides in the membrane. In terms of biological role, forms a voltage-independent potassium channel activated by intracellular calcium. Activation is followed by membrane hyperpolarization. Thought to regulate neuronal excitability by contributing to the slow component of synaptic afterhyperpolarization. The channel is blocked by apamin. In Drosophila melanogaster (Fruit fly), this protein is Small conductance calcium-activated potassium channel protein.